The primary structure comprises 359 residues: Phosphoserine aminotransferase (359 aa).

Ser9 and Arg42 together coordinate L-glutamate. Residues 76–77, Trp102, Thr152, Asp171, and Gln194 contribute to the pyridoxal 5'-phosphate site; that span reads AS. Lys195 is subject to N6-(pyridoxal phosphate)lysine. 236–237 is a pyridoxal 5'-phosphate binding site; that stretch reads NT.

This sequence belongs to the class-V pyridoxal-phosphate-dependent aminotransferase family. SerC subfamily. Homodimer. Pyridoxal 5'-phosphate serves as cofactor.

It is found in the cytoplasm. The catalysed reaction is O-phospho-L-serine + 2-oxoglutarate = 3-phosphooxypyruvate + L-glutamate. It carries out the reaction 4-(phosphooxy)-L-threonine + 2-oxoglutarate = (R)-3-hydroxy-2-oxo-4-phosphooxybutanoate + L-glutamate. It functions in the pathway amino-acid biosynthesis; L-serine biosynthesis; L-serine from 3-phospho-D-glycerate: step 2/3. The protein operates within cofactor biosynthesis; pyridoxine 5'-phosphate biosynthesis; pyridoxine 5'-phosphate from D-erythrose 4-phosphate: step 3/5. In terms of biological role, catalyzes the reversible conversion of 3-phosphohydroxypyruvate to phosphoserine and of 3-hydroxy-2-oxo-4-phosphonooxybutanoate to phosphohydroxythreonine. The sequence is that of Phosphoserine aminotransferase from Marinomonas sp. (strain MWYL1).